The following is a 305-amino-acid chain: Tyrosine recombinase XerC (305 aa).

The region spanning 4–95 (TSIQALINKW…AVKNFYRFLE (92 aa)) is the Core-binding (CB) domain. In terms of domain architecture, Tyr recombinase spans 116 to 298 (LLPKALSEDD…SIKHLEAVYT (183 aa)). Catalysis depends on residues arginine 159, lysine 182, histidine 250, arginine 253, and histidine 276. Tyrosine 285 (O-(3'-phospho-DNA)-tyrosine intermediate) is an active-site residue.

This sequence belongs to the 'phage' integrase family. XerC subfamily. In terms of assembly, forms a cyclic heterotetrameric complex composed of two molecules of XerC and two molecules of XerD.

It localises to the cytoplasm. Site-specific tyrosine recombinase, which acts by catalyzing the cutting and rejoining of the recombining DNA molecules. The XerC-XerD complex is essential to convert dimers of the bacterial chromosome into monomers to permit their segregation at cell division. It also contributes to the segregational stability of plasmids. In Rickettsia conorii (strain ATCC VR-613 / Malish 7), this protein is Tyrosine recombinase XerC.